A 1216-amino-acid chain; its full sequence is ATP-dependent helicase/nuclease subunit A (1216 aa).

Residues 26–488 enclose the UvrD-like helicase ATP-binding domain; that stretch reads QKKTAEQIEA…ILLKANFRSS (463 aa). Residue 47–54 coordinates ATP; it reads ASAGSGKT. Residues 515 to 802 enclose the UvrD-like helicase C-terminal domain; that stretch reads KHQLVFANTK…ELMTIHKSKG (288 aa).

The protein belongs to the helicase family. AddA subfamily. In terms of assembly, heterodimer of AddA and AddB/RexB. Mg(2+) is required as a cofactor.

It catalyses the reaction Couples ATP hydrolysis with the unwinding of duplex DNA by translocating in the 3'-5' direction.. The enzyme catalyses ATP + H2O = ADP + phosphate + H(+). Its function is as follows. The heterodimer acts as both an ATP-dependent DNA helicase and an ATP-dependent, dual-direction single-stranded exonuclease. Recognizes the chi site generating a DNA molecule suitable for the initiation of homologous recombination. The AddA nuclease domain is required for chi fragment generation; this subunit has the helicase and 3' -&gt; 5' nuclease activities. This Streptococcus pneumoniae (strain ATCC 700669 / Spain 23F-1) protein is ATP-dependent helicase/nuclease subunit A.